We begin with the raw amino-acid sequence, 517 residues long: Crotonobetaine/carnitine--CoA ligase (517 aa).

This sequence belongs to the ATP-dependent AMP-binding enzyme family.

It catalyses the reaction 4-(trimethylamino)butanoate + ATP + CoA = 4-(trimethylamino)butanoyl-CoA + AMP + diphosphate. The enzyme catalyses crotonobetaine + ATP + CoA = crotonobetainyl-CoA + AMP + diphosphate. It carries out the reaction (R)-carnitine + ATP + CoA = (R)-carnitinyl-CoA + AMP + diphosphate. Its pathway is amine and polyamine metabolism; carnitine metabolism. Its function is as follows. Catalyzes the transfer of CoA to carnitine, generating the initial carnitinyl-CoA needed for the CaiB reaction cycle. Also has activity toward crotonobetaine and gamma-butyrobetaine. The sequence is that of Crotonobetaine/carnitine--CoA ligase from Escherichia coli (strain ATCC 8739 / DSM 1576 / NBRC 3972 / NCIMB 8545 / WDCM 00012 / Crooks).